We begin with the raw amino-acid sequence, 325 residues long: MQTSLLKPKIIAVESLGESHAKVVMEPFERGYGHTLGNALRRVLLSSMIGYAPTEVTIAGVVHEYSTLDGVQEDVVNLLLNLKGVVFKLHNRDEVTVTLRKEGEGVVTAGDIELAHDCEVINPDHVIAHLSKGGKLDVQIKVEKGRGYVPGNVRRYGEESAKIIGRIVLDASFSPVRRVSYAVESARVEQRTDLDKLVMNIETNGVISPEEAIRQSARILVDQLSVFAALEGTEATAEAPSRAPQIDPILLRPVDDLELTVRSANCLKAENIYYIGDLIQRTENELLKTPNLGRKSLNEIKEVLASRGLTLGMKLENWPPAGLDK.

The interval 1–231 (MQTSLLKPKI…DQLSVFAALE (231 aa)) is alpha N-terminal domain (alpha-NTD). Residues 246–325 (IDPILLRPVD…ENWPPAGLDK (80 aa)) are alpha C-terminal domain (alpha-CTD).

This sequence belongs to the RNA polymerase alpha chain family. Homodimer. The RNAP catalytic core consists of 2 alpha, 1 beta, 1 beta' and 1 omega subunit. When a sigma factor is associated with the core the holoenzyme is formed, which can initiate transcription.

The catalysed reaction is RNA(n) + a ribonucleoside 5'-triphosphate = RNA(n+1) + diphosphate. DNA-dependent RNA polymerase catalyzes the transcription of DNA into RNA using the four ribonucleoside triphosphates as substrates. This Paraburkholderia phytofirmans (strain DSM 17436 / LMG 22146 / PsJN) (Burkholderia phytofirmans) protein is DNA-directed RNA polymerase subunit alpha.